The sequence spans 290 residues: MLPDSSVRLNKYISESGICSRREADRYIEQGNVFLNGKRATIGDQVKPGDVVKVNGQLIEPREAEDLVLIALNKPVGIVSTTEDGERDNIVDFVNHSKRVFPIGRLDKDSQGLIFLTNHGDLVNKILRAGNDHEKEYLVTVDKPITEEFIRGMSAGVPILGTVTKKCKVKKEAPFVFRITLVQGLNRQIRRMCEHFGYEVKKLERTRIMNVSLSGIPLGEWRDLTDDELIDLFKLIENSSSEVKPKAKAKPKTAGIKRPVVKMEKTAEKGGRPASNGKRFTSPGRKKKGR.

The S4 RNA-binding domain maps to 7–72 (VRLNKYISES…EAEDLVLIAL (66 aa)). Interaction with RNA regions lie at residues 105-108 (RLDK) and 187-190 (RQIR). The Nucleophile role is filled by Asp-107. Residues 243–290 (VKPKAKAKPKTAGIKRPVVKMEKTAEKGGRPASNGKRFTSPGRKKKGR) are disordered. Residues 261–271 (VKMEKTAEKGG) are compositionally biased toward basic and acidic residues.

The protein belongs to the pseudouridine synthase RsuA family. As to quaternary structure, monomer.

The enzyme catalyses uridine(2604) in 23S rRNA = pseudouridine(2604) in 23S rRNA. The catalysed reaction is uridine(35) in tRNA(Tyr) = pseudouridine(35) in tRNA(Tyr). Its function is as follows. Dual specificity enzyme that catalyzes the synthesis of pseudouridine from uracil-2604 in 23S ribosomal RNA and from uracil-35 in the anticodon of tRNA(Tyr). Can, to a small extent, also react with uracil-2605. The sequence is that of Dual-specificity RNA pseudouridine synthase RluF (rluF) from Escherichia coli (strain K12).